The following is a 333-amino-acid chain: Taste receptor type 2 member 38 (333 aa).

Residues Met1–Thr17 lie on the Extracellular side of the membrane. Residues Phe18 to Leu38 form a helical membrane-spanning segment. Topologically, residues Val39–Cys55 are cytoplasmic. The chain crosses the membrane as a helical span at residues Val56–Ile76. Over Gln77–Ala94 the chain is Extracellular. The chain crosses the membrane as a helical span at residues Ile95 to Leu115. The Cytoplasmic segment spans residues Leu116–Gln142. A helical membrane pass occupies residues Met143–Phe163. Residues Ser164–Asn190 lie on the Extracellular side of the membrane. N-linked (GlcNAc...) asparagine glycosylation is present at Asn178. The chain crosses the membrane as a helical span at residues Leu191–Val211. The Cytoplasmic segment spans residues Ser212–Ser251. The chain crosses the membrane as a helical span at residues Phe252–Leu272. Over Trp273 to Lys276 the chain is Extracellular. A helical membrane pass occupies residues Ile277–Leu297. Topologically, residues Ile298–Cys333 are cytoplasmic.

The protein belongs to the G-protein coupled receptor T2R family.

The protein resides in the membrane. Receptor that may play a role in the perception of bitterness and is gustducin-linked. May play a role in sensing the chemical composition of the gastrointestinal content. The activity of this receptor may stimulate alpha gustducin, mediate PLC-beta-2 activation and lead to the gating of TRPM5. This chain is Taste receptor type 2 member 38 (TAS2R38), found in Pan troglodytes (Chimpanzee).